A 312-amino-acid chain; its full sequence is Gamma-soluble NSF attachment protein (312 aa).

The interval 281–312 is disordered; sequence KKKAAAPPQAKPEGTAAPAAEEEEDEYAGGLC. Over residues 285–299 the composition is skewed to low complexity; it reads AAPPQAKPEGTAAPA. Over residues 300-312 the composition is skewed to acidic residues; the sequence is AEEEEDEYAGGLC.

Belongs to the SNAP family. As to quaternary structure, interacts with RAB11FIP5. Interacts with VTI1A.

Its subcellular location is the membrane. It is found in the golgi apparatus. Functionally, required for vesicular transport between the endoplasmic reticulum and the Golgi apparatus. The protein is Gamma-soluble NSF attachment protein of Bos taurus (Bovine).